Reading from the N-terminus, the 228-residue chain is Latherin (228 aa).

An N-terminal signal peptide occupies residues 1–20 (MLKVSCLFVLLCGLLVPSSA). Cys153 and Cys196 form a disulfide bridge.

Belongs to the BPI/LBP/Plunc superfamily. Plunc family. Monomer. In terms of processing, no sign of N-X-[ST] acceptor site even though reported as N-glycosylated. Found in sweat (at protein level).

It is found in the secreted. Functionally, major protein in sweat, has surfactant properties. Has a role in temperature regulation by having a capacity to make hydrophobic surfaces wettable and so can function in promoting spreading and evaporation of sweat. In Equus caballus (Horse), this protein is Latherin (LATH).